The chain runs to 225 residues: NAD(P)H-quinone oxidoreductase subunit K, chloroplastic (225 aa).

Residues Cys-43, Cys-44, Cys-108, and Cys-139 each contribute to the [4Fe-4S] cluster site.

It belongs to the complex I 20 kDa subunit family. In terms of assembly, NDH is composed of at least 16 different subunits, 5 of which are encoded in the nucleus. The cofactor is [4Fe-4S] cluster.

The protein localises to the plastid. The protein resides in the chloroplast thylakoid membrane. The catalysed reaction is a plastoquinone + NADH + (n+1) H(+)(in) = a plastoquinol + NAD(+) + n H(+)(out). It carries out the reaction a plastoquinone + NADPH + (n+1) H(+)(in) = a plastoquinol + NADP(+) + n H(+)(out). Functionally, NDH shuttles electrons from NAD(P)H:plastoquinone, via FMN and iron-sulfur (Fe-S) centers, to quinones in the photosynthetic chain and possibly in a chloroplast respiratory chain. The immediate electron acceptor for the enzyme in this species is believed to be plastoquinone. Couples the redox reaction to proton translocation, and thus conserves the redox energy in a proton gradient. The protein is NAD(P)H-quinone oxidoreductase subunit K, chloroplastic of Nasturtium officinale (Watercress).